A 223-amino-acid chain; its full sequence is Endonuclease NucS (223 aa).

It belongs to the NucS endonuclease family.

It is found in the cytoplasm. Functionally, cleaves both 3' and 5' ssDNA extremities of branched DNA structures. The protein is Endonuclease NucS of Mycobacterium marinum (strain ATCC BAA-535 / M).